Here is a 194-residue protein sequence, read N- to C-terminus: Troponin I 4 (194 aa).

A disordered region spans residues 1–27; that stretch reads MSDVDADEARKMAERERKKEEVRKRLE. Basic and acidic residues predominate over residues 7–27; it reads DEARKMAERERKKEEVRKRLE.

It belongs to the troponin I family. In terms of tissue distribution, expression is detected only in pharyngeal muscle cells from embryos to adults.

Its function is as follows. Troponin I is the inhibitory subunit of troponin, the thin filament regulatory complex which confers calcium-sensitivity to muscle actomyosin ATPase activity. This Caenorhabditis elegans protein is Troponin I 4 (tni-4).